Consider the following 326-residue polypeptide: Metallophosphoesterase domain-containing protein 1 (326 aa).

It belongs to the UPF0046 family. In terms of tissue distribution, expressed predominantly in adult brain.

Its function is as follows. May have metallophosphoesterase activity (in vitro). The chain is Metallophosphoesterase domain-containing protein 1 (MPPED1) from Homo sapiens (Human).